The chain runs to 359 residues: Glyceraldehyde-3-phosphate dehydrogenase, glycosomal (359 aa).

Residues 12–13 (RI), Asp38, Gln91, and Ser134 contribute to the NAD(+) site. Residues 165–167 (SCT), Thr197, 226–227 (TG), and Arg249 each bind D-glyceraldehyde 3-phosphate. Cys166 acts as the Nucleophile in catalysis. Residue Asn335 coordinates NAD(+). The Microbody targeting signal motif lies at 357–359 (ARL).

Belongs to the glyceraldehyde-3-phosphate dehydrogenase family. In terms of assembly, homotetramer.

It is found in the glycosome. It catalyses the reaction D-glyceraldehyde 3-phosphate + phosphate + NAD(+) = (2R)-3-phospho-glyceroyl phosphate + NADH + H(+). It participates in carbohydrate degradation; glycolysis; pyruvate from D-glyceraldehyde 3-phosphate: step 1/5. This Trypanosoma cruzi protein is Glyceraldehyde-3-phosphate dehydrogenase, glycosomal.